A 1020-amino-acid chain; its full sequence is Fanconi-associated nuclease 1 (1020 aa).

A compositionally biased stretch (basic and acidic residues) spans 1–11 (MPSQRKSPDQK). The interval 1–24 (MPSQRKSPDQKRPRRSLSTSKTAK) is disordered. A D-box motif is present at residues 14-22 (RRSLSTSKT). A UBZ4-type zinc finger spans residues 41–69 (KLACSTCHKMVPRYDLIRHLDESCANNGV). The Zn(2+) site is built by cysteine 44, cysteine 47, histidine 59, and cysteine 64. Positions 173–208 (KNEGLASQCPQTSPSTPGTSLTDNCPEMEDKDEVLN) are disordered. The span at 180 to 195 (QCPQTSPSTPGTSLTD) shows a compositional bias: polar residues. Residues 212–214 (KEN) carry the KEN box motif. Basic and acidic residues predominate over residues 224–242 (ENASEQKVKNNKITGDESQ). 2 disordered regions span residues 224 to 252 (ENAS…PALT) and 269 to 288 (LVSN…ESAR). Positions 269–278 (LVSNTKSSPG) are enriched in polar residues. Residues 673-737 (SSRAVEVLER…AIRCIREGLA (65 aa)) are a coiled coil. Residues glutamate 837, aspartate 963, glutamate 978, and valine 979 each coordinate Mn(2+). A VRR-NUC domain is found at 898 to 1010 (AESLRAWVGE…GADVEVCHVV (113 aa)).

It belongs to the FAN1 family. Interacts with FANCD2 (when monoubiquitinated). Interacts with FANCI, MLH1, MLH3 and PMS2. Requires Mn(2+) as cofactor. The cofactor is Mg(2+). Post-translationally, ubiquitinated and degraded during mitotic exit by the APC/C-Cdh1 complex.

It is found in the nucleus. It carries out the reaction Hydrolytically removes 5'-nucleotides successively from the 3'-hydroxy termini of 3'-hydroxy-terminated oligonucleotides.. In terms of biological role, nuclease required for the repair of DNA interstrand cross-links (ICL) recruited at sites of DNA damage by monoubiquitinated FANCD2. Specifically involved in repair of ICL-induced DNA breaks by being required for efficient homologous recombination, probably in the resolution of homologous recombination intermediates. Not involved in DNA double-strand breaks resection. Acts as a 5'-3' exonuclease that anchors at a cut end of DNA and cleaves DNA successively at every third nucleotide, allowing to excise an ICL from one strand through flanking incisions. Probably keeps excising with 3'-flap annealing until it reaches and unhooks the ICL. Acts at sites that have a 5'-terminal phosphate anchor at a nick or a 1- or 2-nucleotide flap and is augmented by a 3' flap. Also has endonuclease activity toward 5'-flaps. The protein is Fanconi-associated nuclease 1 of Mus musculus (Mouse).